Reading from the N-terminus, the 132-residue chain is ATP synthase epsilon chain (132 aa).

It belongs to the ATPase epsilon chain family. F-type ATPases have 2 components, CF(1) - the catalytic core - and CF(0) - the membrane proton channel. CF(1) has five subunits: alpha(3), beta(3), gamma(1), delta(1), epsilon(1). CF(0) has three main subunits: a, b and c.

Its subcellular location is the cell inner membrane. Produces ATP from ADP in the presence of a proton gradient across the membrane. The sequence is that of ATP synthase epsilon chain from Anaeromyxobacter sp. (strain K).